A 943-amino-acid polypeptide reads, in one-letter code: Isoleucine--tRNA ligase (943 aa).

The short motif at 58–68 (PYANGSIHIGH) is the 'HIGH' region element. Glu-567 contributes to the L-isoleucyl-5'-AMP binding site. A 'KMSKS' region motif is present at residues 608–612 (KMSKS). Position 611 (Lys-611) interacts with ATP. 4 residues coordinate Zn(2+): Cys-906, Cys-909, Cys-926, and Cys-929.

It belongs to the class-I aminoacyl-tRNA synthetase family. IleS type 1 subfamily. As to quaternary structure, monomer. Zn(2+) is required as a cofactor.

The protein localises to the cytoplasm. The enzyme catalyses tRNA(Ile) + L-isoleucine + ATP = L-isoleucyl-tRNA(Ile) + AMP + diphosphate. Functionally, catalyzes the attachment of isoleucine to tRNA(Ile). As IleRS can inadvertently accommodate and process structurally similar amino acids such as valine, to avoid such errors it has two additional distinct tRNA(Ile)-dependent editing activities. One activity is designated as 'pretransfer' editing and involves the hydrolysis of activated Val-AMP. The other activity is designated 'posttransfer' editing and involves deacylation of mischarged Val-tRNA(Ile). This Pseudomonas aeruginosa (strain ATCC 15692 / DSM 22644 / CIP 104116 / JCM 14847 / LMG 12228 / 1C / PRS 101 / PAO1) protein is Isoleucine--tRNA ligase.